The sequence spans 490 residues: UDP-N-acetylmuramate--L-alanine ligase (490 aa).

130 to 136 (GTHGKTT) is an ATP binding site.

It belongs to the MurCDEF family.

The protein localises to the cytoplasm. The enzyme catalyses UDP-N-acetyl-alpha-D-muramate + L-alanine + ATP = UDP-N-acetyl-alpha-D-muramoyl-L-alanine + ADP + phosphate + H(+). The protein operates within cell wall biogenesis; peptidoglycan biosynthesis. Cell wall formation. The sequence is that of UDP-N-acetylmuramate--L-alanine ligase from Idiomarina loihiensis (strain ATCC BAA-735 / DSM 15497 / L2-TR).